Reading from the N-terminus, the 799-residue chain is LPS-assembly protein LptD (799 aa).

The signal sequence occupies residues 1-34; the sequence is MMHELDLRPHLARFAQRPLALLAWALLQGTSVNA.

It belongs to the LptD family. As to quaternary structure, component of the lipopolysaccharide transport and assembly complex. Interacts with LptE and LptA.

Its subcellular location is the cell outer membrane. In terms of biological role, together with LptE, is involved in the assembly of lipopolysaccharide (LPS) at the surface of the outer membrane. This Albidiferax ferrireducens (strain ATCC BAA-621 / DSM 15236 / T118) (Rhodoferax ferrireducens) protein is LPS-assembly protein LptD.